A 340-amino-acid polypeptide reads, in one-letter code: Anthranilate phosphoribosyltransferase (340 aa).

5-phospho-alpha-D-ribose 1-diphosphate-binding positions include Gly81, 84 to 85 (GD), Thr89, 91 to 94 (NIST), 109 to 117 (KHGNRNLSS), and Ala121. Gly81 provides a ligand contact to anthranilate. Residue Ser93 participates in Mg(2+) binding. Asn112 contacts anthranilate. Arg167 lines the anthranilate pocket. Mg(2+)-binding residues include Asp226 and Glu227.

The protein belongs to the anthranilate phosphoribosyltransferase family. Homodimer. It depends on Mg(2+) as a cofactor.

It catalyses the reaction N-(5-phospho-beta-D-ribosyl)anthranilate + diphosphate = 5-phospho-alpha-D-ribose 1-diphosphate + anthranilate. It participates in amino-acid biosynthesis; L-tryptophan biosynthesis; L-tryptophan from chorismate: step 2/5. Functionally, catalyzes the transfer of the phosphoribosyl group of 5-phosphorylribose-1-pyrophosphate (PRPP) to anthranilate to yield N-(5'-phosphoribosyl)-anthranilate (PRA). The sequence is that of Anthranilate phosphoribosyltransferase from Ruegeria sp. (strain TM1040) (Silicibacter sp.).